The chain runs to 60 residues: Putative per-hexamer repeat protein 1 (60 aa).

This is Putative per-hexamer repeat protein 1 (Phxr1) from Mus musculus (Mouse).